A 277-amino-acid polypeptide reads, in one-letter code: Heme oxygenase (277 aa).

H29 lines the heme b pocket.

It belongs to the heme oxygenase family.

The protein resides in the microsome. Its subcellular location is the endoplasmic reticulum. It catalyses the reaction heme b + 3 reduced [NADPH--hemoprotein reductase] + 3 O2 = biliverdin IXalpha + CO + Fe(2+) + 3 oxidized [NADPH--hemoprotein reductase] + 3 H2O + H(+). In terms of biological role, heme oxygenase cleaves the heme ring at the alpha methene bridge to form biliverdin. Biliverdin is subsequently converted to bilirubin by biliverdin reductase. Under physiological conditions, the activity of heme oxygenase is highest in the spleen, where senescent erythrocytes are sequestrated and destroyed. This Takifugu rubripes (Japanese pufferfish) protein is Heme oxygenase (hmox).